The sequence spans 71 residues: UPF0346 protein MGAS2096_Spy0401 (71 aa).

The protein belongs to the UPF0346 family.

The protein is UPF0346 protein MGAS2096_Spy0401 of Streptococcus pyogenes serotype M12 (strain MGAS2096).